We begin with the raw amino-acid sequence, 93 residues long: Large ribosomal subunit protein eL37A (93 aa).

Residues Cys19, Cys22, Cys34, and Cys37 each contribute to the Zn(2+) site. The segment at 19–37 (CRRCGRSSYHIQKSTCAQC) adopts a C4-type zinc-finger fold.

It belongs to the eukaryotic ribosomal protein eL37 family. It depends on Zn(2+) as a cofactor.

In terms of biological role, binds to the 23S rRNA. The chain is Large ribosomal subunit protein eL37A from Drosophila melanogaster (Fruit fly).